The following is a 153-amino-acid chain: Pheromone-binding protein Gp-9 (153 aa).

A signal peptide spans 1-19 (MKTFVLHIFIFALVAFASA). Disulfide bonds link cysteine 37/cysteine 77, cysteine 73/cysteine 129, and cysteine 118/cysteine 138.

It belongs to the PBP/GOBP family. Homodimer.

Its subcellular location is the secreted. Functionally, colony queen number, a major feature of social organization, is associated with worker genotype for Gp-9. Colonies are headed by either a single reproductive queen (monogyne form) or multiple queens (polygyne form). Differences in worker Gp-9 genotypes between social forms may cause differences in workers' abilities to recognize queens and regulate their numbers. This is Pheromone-binding protein Gp-9 from Solenopsis invicta (Red imported fire ant).